The chain runs to 341 residues: Biotin synthase (341 aa).

One can recognise a Radical SAM core domain in the interval E39–L263. [4Fe-4S] cluster is bound by residues C54, C58, and C61. [2Fe-2S] cluster contacts are provided by C98, C129, C189, and R267.

This sequence belongs to the radical SAM superfamily. Biotin synthase family. In terms of assembly, homodimer. It depends on [4Fe-4S] cluster as a cofactor. [2Fe-2S] cluster serves as cofactor.

It carries out the reaction (4R,5S)-dethiobiotin + (sulfur carrier)-SH + 2 reduced [2Fe-2S]-[ferredoxin] + 2 S-adenosyl-L-methionine = (sulfur carrier)-H + biotin + 2 5'-deoxyadenosine + 2 L-methionine + 2 oxidized [2Fe-2S]-[ferredoxin]. It participates in cofactor biosynthesis; biotin biosynthesis; biotin from 7,8-diaminononanoate: step 2/2. In terms of biological role, catalyzes the conversion of dethiobiotin (DTB) to biotin by the insertion of a sulfur atom into dethiobiotin via a radical-based mechanism. In Erythrobacter litoralis (strain HTCC2594), this protein is Biotin synthase.